The following is a 235-amino-acid chain: Probable WRKY transcription factor 66 (235 aa).

The segment at residues S79–P147 is a DNA-binding region (WRKY).

It belongs to the WRKY group III family.

The protein localises to the nucleus. In terms of biological role, transcription factor. Interacts specifically with the W box (5'-(T)TGAC[CT]-3'), a frequently occurring elicitor-responsive cis-acting element. This Arabidopsis thaliana (Mouse-ear cress) protein is Probable WRKY transcription factor 66 (WRKY66).